The chain runs to 875 residues: Receptor-like protein 33 (875 aa).

Residues 1-23 form the signal peptide; the sequence is MSLIPITFYFLFLFFSNFRGVFA. Residues 24–822 lie on the Extracellular side of the membrane; it reads VPNIHLCHFE…GESETLESEQ (799 aa). Residues Asn-65, Asn-103, Asn-133, Asn-146, and Asn-181 are each glycosylated (N-linked (GlcNAc...) asparagine). LRR repeat units lie at residues 110 to 133, 134 to 157, 159 to 182, 183 to 205, 206 to 230, 231 to 254, 256 to 278, 280 to 302, 303 to 327, and 329 to 351; these read FHFL…SIGN, LSHL…SLGN, FHLT…LGNL, SYLT…SFGS, LNQL…VINL, TKLS…ITSL, ILES…LFTI, SITL…NISS, PSNL…ISRL, and NLRT…IFSH. Asn-229 and Asn-250 each carry an N-linked (GlcNAc...) asparagine glycan. Asn-299 carries N-linked (GlcNAc...) asparagine glycosylation. An LRR 11; degenerate repeat occupies 352-377; sequence LKLLGNLYLSHSNTTTTIDLNAVLSC. N-linked (GlcNAc...) asparagine glycosylation is found at Asn-364, Asn-395, and Asn-411. LRR repeat units follow at residues 378-401, 404-427, 428-451, 455-477, 479-502, 503-528, 530-549, 550-573, 575-596, 597-619, 620-643, 686-710, 711-734, 735-758, and 760-783; these read FKML…SVSD, LGLI…LRTQ, RQMR…LLLQ, MHIS…TVVP, PSMK…ICSL, RSLI…KFKS, LSDL…KTII, KSLR…LIHF, TLEV…WLSS, LKKL…KTRF, PKLR…CFVE, LKIY…IGLL, KELH…MGNL, RELE…LGNL, and YLAY…QFRT. N-linked (GlcNAc...) asparagine glycans are attached at residues Asn-490 and Asn-514. A glycan (N-linked (GlcNAc...) asparagine) is linked at Asn-587. A glycan (N-linked (GlcNAc...) asparagine) is linked at Asn-633. Asn-717, Asn-757, and Asn-765 each carry an N-linked (GlcNAc...) asparagine glycan. Residues 823-843 traverse the membrane as a helical segment; sequence VLSWIAAAIGFTPGIVLGLTI. Residues 844-875 lie on the Cytoplasmic side of the membrane; sequence GHIVLSSKPRWFFKVLYINNSRRRRRTRSEKS.

The protein belongs to the RLP family.

It is found in the cell membrane. This Arabidopsis thaliana (Mouse-ear cress) protein is Receptor-like protein 33.